The chain runs to 404 residues: Phosphopentomutase (404 aa).

Residues Asp-10, Asp-303, His-308, Asp-344, His-345, and His-356 each contribute to the Mn(2+) site.

This sequence belongs to the phosphopentomutase family. Requires Mn(2+) as cofactor.

The protein localises to the cytoplasm. The enzyme catalyses 2-deoxy-alpha-D-ribose 1-phosphate = 2-deoxy-D-ribose 5-phosphate. The catalysed reaction is alpha-D-ribose 1-phosphate = D-ribose 5-phosphate. Its pathway is carbohydrate degradation; 2-deoxy-D-ribose 1-phosphate degradation; D-glyceraldehyde 3-phosphate and acetaldehyde from 2-deoxy-alpha-D-ribose 1-phosphate: step 1/2. Its function is as follows. Isomerase that catalyzes the conversion of deoxy-ribose 1-phosphate (dRib-1-P) and ribose 1-phosphate (Rib-1-P) to deoxy-ribose 5-phosphate (dRib-5-P) and ribose 5-phosphate (Rib-5-P), respectively. The chain is Phosphopentomutase from Shewanella sp. (strain W3-18-1).